The sequence spans 262 residues: Probable aminoglycoside 3'-phosphotransferase (262 aa).

D187 (proton acceptor) is an active-site residue.

It belongs to the aminoglycoside phosphotransferase family.

It catalyses the reaction kanamycin A + ATP = kanamycin 3'-phosphate + ADP + H(+). The polypeptide is Probable aminoglycoside 3'-phosphotransferase (ymdC) (Lactococcus lactis subsp. lactis (strain IL1403) (Streptococcus lactis)).